Here is a 331-residue protein sequence, read N- to C-terminus: Phosphoribosylformylglycinamidine cyclo-ligase (331 aa).

The protein belongs to the AIR synthase family.

The protein resides in the cytoplasm. The catalysed reaction is 2-formamido-N(1)-(5-O-phospho-beta-D-ribosyl)acetamidine + ATP = 5-amino-1-(5-phospho-beta-D-ribosyl)imidazole + ADP + phosphate + H(+). Its pathway is purine metabolism; IMP biosynthesis via de novo pathway; 5-amino-1-(5-phospho-D-ribosyl)imidazole from N(2)-formyl-N(1)-(5-phospho-D-ribosyl)glycinamide: step 2/2. This Clostridium botulinum (strain Okra / Type B1) protein is Phosphoribosylformylglycinamidine cyclo-ligase.